The chain runs to 224 residues: A-factor barrier protein 1 (224 aa).

The N-terminal stretch at 1 to 25 (MIFAPSFSLIKNILLVSFLISHSFA) is a signal peptide. Asparagine 148, asparagine 181, and asparagine 191 each carry an N-linked (GlcNAc...) asparagine glycan. The GPI-anchor amidated asparagine moiety is linked to residue asparagine 203. Positions 204 to 224 (GAHAKSLYFPMALFGIFAVAL) are cleaved as a propeptide — removed in mature form.

The protein belongs to the SRP1/TIP1 family. In terms of processing, the GPI-anchor is attached to the protein in the endoplasmic reticulum and serves to target the protein to the cell surface. There, the glucosamine-inositol phospholipid moiety is cleaved off and the GPI-modified mannoprotein is covalently attached via its lipidless GPI glycan remnant to the 1,6-beta-glucan of the outer cell wall layer.

The protein localises to the secreted. The protein resides in the cell wall. It localises to the membrane. MATalpha-specific protein that interferes with a-factor, the pheromone secreted by MATa cells. Contributes to mating efficiency. Acts to bind and sequester a-factor rather than to degrade it, and promotes the efficient mating of MATalpha cells by keeping the a-factor concentration at the plasma membrane within the narrow range needed for accurate pheromone gradient detection. This Saccharomyces cerevisiae (strain ATCC 204508 / S288c) (Baker's yeast) protein is A-factor barrier protein 1.